Reading from the N-terminus, the 963-residue chain is Importin-13 (963 aa).

20 HEAT repeats span residues 24–54 (ESVE…QAQV), 56–88 (PQAW…KTSR), 95–135 (TDQY…LSMM), 142–179 (AVAD…EFQT), 194–231 (LAVE…SWVQ), 236–268 (LQDC…NAIS), 276–325 (VNTL…ALLD), 330–372 (WQSF…DDIL), 375–438 (EAEK…YEML), 440–476 (AELL…FQSI), 487–522 (VVPG…WLAD), 524–558 (PVMI…CREC), 562–600 (LPPY…LLSA), 603–648 (VEEI…SNLF), 676–716 (PVVV…VKTL), 720–754 (FAPM…VHIF), 761–803 (FPPI…ALKR), 815–845 (VKAV…TELL), 860–893 (EDGR…FALN), and 897–931 (FSLL…QQIL). The Importin N-terminal domain occupies 45 to 111 (AQKWLMQAQV…KAQLFTQITR (67 aa)).

The protein belongs to the importin beta family. As to quaternary structure, interacts with UBC9, RAN, RBM8A, eIF-1A and PAX6.

It localises to the cytoplasm. Its subcellular location is the nucleus. In terms of biological role, functions in nuclear protein import as nuclear transport receptor. Serves as receptor for nuclear localization signals (NLS) in cargo substrates. Is thought to mediate docking of the importin/substrate complex to the nuclear pore complex (NPC) through binding to nucleoporin and the complex is subsequently translocated through the pore by an energy requiring, Ran-dependent mechanism. At the nucleoplasmic side of the NPC, Ran binds to the importin, the importin/substrate complex dissociates and importin is re-exported from the nucleus to the cytoplasm where GTP hydrolysis releases Ran. The directionality of nuclear import is thought to be conferred by an asymmetric distribution of the GTP- and GDP-bound forms of Ran between the cytoplasm and nucleus. Mediates the nuclear import of UBC9, the RBM8A/MAGOH complex, PAX6 and probably other members of the paired homeobox family. Also mediates nuclear export of eIF-1A, and the cytoplasmic release of eIF-1A is triggered by the loading of import substrates onto IPO13. The sequence is that of Importin-13 (IPO13) from Pongo abelii (Sumatran orangutan).